We begin with the raw amino-acid sequence, 388 residues long: Succinate--CoA ligase [ADP-forming] subunit beta (388 aa).

One can recognise an ATP-grasp domain in the interval 9–244; that stretch reads KQLFARYGLP…PSQEDSREAH (236 aa). Residues K46, 53–55, E99, T102, and E107 contribute to the ATP site; that span reads GRG. Mg(2+)-binding residues include N199 and D213. Substrate-binding positions include N264 and 321-323; that span reads GIV.

This sequence belongs to the succinate/malate CoA ligase beta subunit family. Heterotetramer of two alpha and two beta subunits. Requires Mg(2+) as cofactor.

It carries out the reaction succinate + ATP + CoA = succinyl-CoA + ADP + phosphate. It catalyses the reaction GTP + succinate + CoA = succinyl-CoA + GDP + phosphate. It functions in the pathway carbohydrate metabolism; tricarboxylic acid cycle; succinate from succinyl-CoA (ligase route): step 1/1. In terms of biological role, succinyl-CoA synthetase functions in the citric acid cycle (TCA), coupling the hydrolysis of succinyl-CoA to the synthesis of either ATP or GTP and thus represents the only step of substrate-level phosphorylation in the TCA. The beta subunit provides nucleotide specificity of the enzyme and binds the substrate succinate, while the binding sites for coenzyme A and phosphate are found in the alpha subunit. In Erwinia tasmaniensis (strain DSM 17950 / CFBP 7177 / CIP 109463 / NCPPB 4357 / Et1/99), this protein is Succinate--CoA ligase [ADP-forming] subunit beta.